The following is a 335-amino-acid chain: 3-isopropylmalate dehydrogenase (335 aa).

Substrate-binding residues include Arg87, Arg97, Arg121, and Asp211. 3 residues coordinate Mg(2+): Asp211, Asp235, and Asp239. Residue 271–283 coordinates NAD(+); sequence GSAPDIAGQSKAD.

This sequence belongs to the isocitrate and isopropylmalate dehydrogenases family. LeuB type 2 subfamily. Homodimer. It depends on Mg(2+) as a cofactor. Requires Mn(2+) as cofactor.

Its subcellular location is the cytoplasm. The catalysed reaction is (2R,3S)-3-isopropylmalate + NAD(+) = 4-methyl-2-oxopentanoate + CO2 + NADH. It functions in the pathway amino-acid biosynthesis; L-leucine biosynthesis; L-leucine from 3-methyl-2-oxobutanoate: step 3/4. In terms of biological role, catalyzes the oxidation of 3-carboxy-2-hydroxy-4-methylpentanoate (3-isopropylmalate) to 3-carboxy-4-methyl-2-oxopentanoate. The product decarboxylates to 4-methyl-2 oxopentanoate. The chain is 3-isopropylmalate dehydrogenase from Nocardia farcinica (strain IFM 10152).